The chain runs to 461 residues: Tip elongation protein 1 (461 aa).

Residues 22 to 69 (GEVENRKGVYVGLELLPEFAEFGKNRGVVDGREYFKTKNNEKTGIFVP) enclose the CAP-Gly domain. Phosphoserine is present on residues Ser-82, Ser-84, Ser-289, Ser-294, and Ser-305. The stretch at 134 to 418 (TEKILQKRIE…RMSPAEFELE (285 aa)) forms a coiled coil. Residues 278-303 (KANSSTANEKLSHMESSSPTLTNASF) are compositionally biased toward polar residues. The tract at residues 278 to 323 (KANSSTANEKLSHMESSSPTLTNASFESPKRGKGSNDLPENHPQRR) is disordered. A Phosphothreonine modification is found at Thr-367. Positions 417 to 437 (LETTQEVEENDSDSHDDEETW) are disordered.

Monomer. Interacts with tea1 and tea2. Interacts with tea4 in the presence of tea1.

The protein resides in the cytoplasm. It is found in the cytoskeleton. In terms of biological role, has a role in stabilizing and targeting the growing tips of the microtubules along the long axis of the cell, directing them to the ends of the cell. Acts as a cargo for tea2. The sequence is that of Tip elongation protein 1 (tip1) from Schizosaccharomyces pombe (strain 972 / ATCC 24843) (Fission yeast).